The following is a 164-amino-acid chain: Heat shock protein beta-6 (164 aa).

The interval 1–72 is involved in stabilization of the HSPB1:HSBP6 heterodimer; the sequence is MEIPVSVQPS…PTAQVSTDPG (72 aa). Position 16 is a phosphoserine (S16). Residues 56–163 form the sHSP domain; the sequence is RAPSVALPTA…PLQSPPGAAA (108 aa). Position 66 is a deamidated glutamine (Q66). At S157 the chain carries Phosphoserine.

It belongs to the small heat shock protein (HSP20) family. In terms of assembly, homodimer. Small heat shock proteins form high molecular mass oligomers containing variable number of monomers; these oligomers display a very flexible quaternary structure easily exchanging their subunits. Heterooligomer with HSPB1; formed through oligomerization of HSPB1:HSBP6 dimers; subunit exchange leads to formation of at least two different heterooligomeric complexes, differing in variable quantities of HSPB1 and HSPB6 homodimers in addition to HSPB1:HSPB6 heterodimers. Heterooligomer with CRYAB; large heterooligomers consist of CRYAB homodimers and HSPB5:HSPB6 heterodimers but lacking HSPB6 homodimers. Interacts with BAG3. Interacts (phosphorylated) with YWHAZ. Interacts with PDE4A and PDE4D; required for maintenance of the non-phosphorylated state of HSPB6 under basal conditions. Interacts with KDR. Interacts with PRKD1. Post-translationally, phosphorylated at Ser-16 by PKA and probably PKD1K; required to protect cardiomyocytes from apoptosis.

The protein resides in the cytoplasm. Its subcellular location is the nucleus. It localises to the secreted. Small heat shock protein which functions as a molecular chaperone probably maintaining denatured proteins in a folding-competent state. Seems to have versatile functions in various biological processes. Plays a role in regulating muscle function such as smooth muscle vasorelaxation and cardiac myocyte contractility. May regulate myocardial angiogenesis implicating KDR. Overexpression mediates cardioprotection and angiogenesis after induced damage. Stabilizes monomeric YWHAZ thereby supporting YWHAZ chaperone-like activity. This is Heat shock protein beta-6 (HSPB6) from Bos taurus (Bovine).